Consider the following 60-residue polypeptide: uncharacterized protein (60 aa).

The helical transmembrane segment at 27–49 (YYWLVSTARMVLGVTILILILIG) threads the bilayer.

It localises to the membrane. This is an uncharacterized protein from Archaeoglobus fulgidus (strain ATCC 49558 / DSM 4304 / JCM 9628 / NBRC 100126 / VC-16).